Here is a 290-residue protein sequence, read N- to C-terminus: Cilia- and flagella-associated protein 298 (290 aa).

This sequence belongs to the CFAP298 family. Interacts with ZMYND10.

The protein localises to the cytoplasm. It localises to the cytoskeleton. It is found in the cilium basal body. Functionally, plays a role in motile cilium function, possibly by acting on outer dynein arm assembly. Seems to be important for initiation rather than maintenance of cilium motility. Required for correct positioning of cilia at the apical cell surface, suggesting an additional role in the planar cell polarity (PCP) pathway. May suppress canonical Wnt signaling activity. This is Cilia- and flagella-associated protein 298 from Mus musculus (Mouse).